The sequence spans 528 residues: (R)-citramalate synthase (528 aa).

The 267-residue stretch at 5-271 (VYIYDTTLRD…IPQENLKKLT (267 aa)) folds into the Pyruvate carboxyltransferase domain.

This sequence belongs to the alpha-IPM synthase/homocitrate synthase family.

The enzyme catalyses pyruvate + acetyl-CoA + H2O = (3R)-citramalate + CoA + H(+). The protein operates within amino-acid biosynthesis; L-isoleucine biosynthesis; 2-oxobutanoate from pyruvate: step 1/3. Its function is as follows. Catalyzes the condensation of pyruvate and acetyl-coenzyme A to form (R)-citramalate. This Aquifex aeolicus (strain VF5) protein is (R)-citramalate synthase.